Consider the following 482-residue polypeptide: PHD finger protein At3g20280 (482 aa).

The PHD-type zinc-finger motif lies at 45–97 (AMACQICEVTINEMDTLLICDACEKAYHLKCLQGNNMKGVPKSEWHCSRCVQA). Disordered regions lie at residues 188–210 (TNIGSQGSKENVACGANSPAPVS) and 314–482 (SSNS…ENAA). Low complexity predominate over residues 314-324 (SSNSQQAVSHS). Polar residues-rich tracts occupy residues 377–386 (ACQNHPTASP) and 393–428 (QDSTITAAPSVTQEDSAFNTEKTPPQPLSVSSNYDS). A compositionally biased stretch (basic and acidic residues) spans 447–482 (DSEKGKGLNGLDDRHQEQPSEPEFYKSDSVKEENAA).

This is PHD finger protein At3g20280 from Arabidopsis thaliana (Mouse-ear cress).